The chain runs to 148 residues: uncharacterized protein (148 aa).

The next 3 membrane-spanning stretches (helical) occupy residues 25–45 (FCTVGVGNTLIDFGVFFLLTA), 85–105 (IVRFLMINIAASGITFLLLYL), and 118–138 (LAATIGGMMMNFIGNRIWVFG).

The protein belongs to the GtrA family.

The protein resides in the cell membrane. This is an uncharacterized protein from Bacillus subtilis (strain 168).